The sequence spans 391 residues: NADH-quinone oxidoreductase subunit D (391 aa).

The protein belongs to the complex I 49 kDa subunit family. In terms of assembly, NDH-1 is composed of 14 different subunits. Subunits NuoB, C, D, E, F, and G constitute the peripheral sector of the complex.

The protein localises to the cell inner membrane. It catalyses the reaction a quinone + NADH + 5 H(+)(in) = a quinol + NAD(+) + 4 H(+)(out). NDH-1 shuttles electrons from NADH, via FMN and iron-sulfur (Fe-S) centers, to quinones in the respiratory chain. The immediate electron acceptor for the enzyme in this species is believed to be ubiquinone. Couples the redox reaction to proton translocation (for every two electrons transferred, four hydrogen ions are translocated across the cytoplasmic membrane), and thus conserves the redox energy in a proton gradient. This Rickettsia canadensis (strain McKiel) protein is NADH-quinone oxidoreductase subunit D.